We begin with the raw amino-acid sequence, 388 residues long: AT-rich binding protein (388 aa).

The C2H2-type 1 zinc-finger motif lies at 29 to 52 (IVCHTCQEELQTQDQFWKHIQDEH). 2 stretches are compositionally biased toward low complexity: residues 138–165 (QQHQ…LQQQ) and 249–265 (VSVS…STTP). Disordered stretches follow at residues 138-168 (QQHQ…QRDV) and 240-265 (PPPP…STTP). 2 consecutive C2H2-type zinc fingers follow at residues 321 to 345 (YVCD…RVVH) and 351 to 374 (FNCE…KKKH).

Its subcellular location is the nucleus. Its function is as follows. May be a transcription factor for genes having (A+T) stretches in their promoter and/or enhancer regions. Binds to AT rich DNA. The polypeptide is AT-rich binding protein (Drosophila melanogaster (Fruit fly)).